Reading from the N-terminus, the 561-residue chain is Putative transport protein KPK_3686 (561 aa).

5 helical membrane-spanning segments follow: residues 8 to 28 (LLNGNYILLLFVVLALGLCLG), 37 to 57 (LGNSIGVLVVSLLLGQQHFAI), 66 to 86 (FMLFIFCVGVEAGPNFFSIFF), 94 to 114 (MLALVMVGSAMLIATVLGKVF), and 158 to 178 (HLSLGYALTYLVGLVSLIVGA). RCK C-terminal domains follow at residues 202–288 (LDTD…SFRN) and 292–373 (VFDR…RIGF). Helical transmembrane passes span 383–403 (LLAFCAFFIVGLMIGMITFQF), 406–426 (FSFGIGNAAGLLFAGIMLGFL), 447–467 (FGLMVFMAGVGLSAGAGINNG), 478–498 (AGLIVSLLPVVICFLFGAYVL), and 540–560 (AIANVLLTLAGTLIVIIWPGL).

The protein belongs to the AAE transporter (TC 2.A.81) family. YbjL subfamily.

It is found in the cell membrane. This is Putative transport protein KPK_3686 from Klebsiella pneumoniae (strain 342).